Consider the following 209-residue polypeptide: Uracil phosphoribosyltransferase (209 aa).

Residues R79, R104, and 131 to 139 (DPMLATGGS) contribute to the 5-phospho-alpha-D-ribose 1-diphosphate site. Uracil contacts are provided by residues I194 and 199 to 201 (GDA). Residue D200 participates in 5-phospho-alpha-D-ribose 1-diphosphate binding.

Belongs to the UPRTase family. The cofactor is Mg(2+).

It carries out the reaction UMP + diphosphate = 5-phospho-alpha-D-ribose 1-diphosphate + uracil. Its pathway is pyrimidine metabolism; UMP biosynthesis via salvage pathway; UMP from uracil: step 1/1. Its activity is regulated as follows. Allosterically activated by GTP. Catalyzes the conversion of uracil and 5-phospho-alpha-D-ribose 1-diphosphate (PRPP) to UMP and diphosphate. The polypeptide is Uracil phosphoribosyltransferase (Lactiplantibacillus plantarum (strain ATCC BAA-793 / NCIMB 8826 / WCFS1) (Lactobacillus plantarum)).